The sequence spans 165 residues: uncharacterized protein (165 aa).

Residues Q28–K139 enclose the Cupin type-1 domain.

This is an uncharacterized protein from Bacillus subtilis (strain 168).